The chain runs to 102 residues: Small ribosomal subunit protein uS10 (102 aa).

It belongs to the universal ribosomal protein uS10 family. As to quaternary structure, part of the 30S ribosomal subunit.

Functionally, involved in the binding of tRNA to the ribosomes. The sequence is that of Small ribosomal subunit protein uS10 from Micrococcus luteus (strain ATCC 4698 / DSM 20030 / JCM 1464 / CCM 169 / CCUG 5858 / IAM 1056 / NBRC 3333 / NCIMB 9278 / NCTC 2665 / VKM Ac-2230) (Micrococcus lysodeikticus).